A 327-amino-acid polypeptide reads, in one-letter code: 2-keto-3-deoxygluconate permease (327 aa).

Helical transmembrane passes span 10–30 (IPGG…TFSP), 42–62 (GMIT…GASI), 73–93 (KSGT…AIAS), 95–115 (IIPE…LALV), 139–159 (AGAF…IILG), 163–183 (IASF…VGFA), 199–219 (VQTL…LTVI), 224–244 (LLGI…LIIA), 254–274 (TAGI…VLIA), and 289–309 (SLVA…TSIW).

This sequence belongs to the KdgT transporter family.

The protein localises to the cell inner membrane. The catalysed reaction is 2-dehydro-3-deoxy-D-gluconate(in) + H(+)(in) = 2-dehydro-3-deoxy-D-gluconate(out) + H(+)(out). Its function is as follows. Catalyzes the proton-dependent uptake of 2-keto-3-deoxygluconate (KDG) into the cell. This chain is 2-keto-3-deoxygluconate permease, found in Escherichia coli O139:H28 (strain E24377A / ETEC).